The following is a 769-amino-acid chain: Acetyl-coenzyme A carboxylase carboxyl transferase subunit alpha, chloroplastic (769 aa).

A chloroplast-targeting transit peptide spans 1 to 54 (MASISHSSLALGGASSASASDYLRSSSNGVNGVPLKTLGRAVFTTIRRKDLAVT). A CoA carboxyltransferase C-terminal domain is found at 132–385 (LENKYRQALK…KIAINENMNE (254 aa)). 2 coiled-coil regions span residues 426–504 (EAVF…ASSE) and 631–744 (KQNQ…SDGS). The segment at 718-769 (GLQEKQDELEKELAAARELAAEESDGSVKEDDDDDEDSSESGKSEMVNPSFA) is disordered. Residues 721 to 732 (EKQDELEKELAA) show a composition bias toward basic and acidic residues. Over residues 738-756 (AEESDGSVKEDDDDDEDSS) the composition is skewed to acidic residues. At serine 741 the chain carries Phosphoserine.

It belongs to the AccA family. Acetyl-CoA carboxylase is a heterohexamer composed of biotin carboxyl carrier protein, biotin carboxylase and two subunits each of ACCase subunit alpha and ACCase plastid-coded subunit beta (accD). In terms of tissue distribution, accumulates in fatty acids synthesizing tissues such as embryos, expanding leaves, flower buds, flowers, and developing siliques.

It localises to the plastid. The protein resides in the chloroplast inner membrane. The catalysed reaction is N(6)-carboxybiotinyl-L-lysyl-[protein] + acetyl-CoA = N(6)-biotinyl-L-lysyl-[protein] + malonyl-CoA. It functions in the pathway lipid metabolism; malonyl-CoA biosynthesis; malonyl-CoA from acetyl-CoA: step 1/1. In terms of biological role, component of the acetyl coenzyme A carboxylase (ACC) complex. First, biotin carboxylase catalyzes the carboxylation of biotin on its carrier protein (BCCP) and then the CO(2) group is transferred by the carboxyltransferase to acetyl-CoA to form malonyl-CoA. In Arabidopsis thaliana (Mouse-ear cress), this protein is Acetyl-coenzyme A carboxylase carboxyl transferase subunit alpha, chloroplastic (CAC3).